Reading from the N-terminus, the 596-residue chain is Interleukin-1 receptor-associated kinase 3 (596 aa).

Residues 41-106 form the Death domain; sequence WRGLAERLSS…RAIHLITNYG (66 aa). S110 bears the Phosphoserine; by IRAK1 mark. The Protein kinase domain occupies 165-452; it reads FHKDFLIGEG…LESTQASLYF (288 aa). ATP is bound by residues 171-179, K192, 295-298, and D311; these read IGEGEIFEV and SSAN. S467 carries the post-translational modification Phosphoserine. The disordered stretch occupies residues 560 to 596; the sequence is NIDPSSEAPGHSCRSRPVESSCSSKFSWDEYEQYKKE.

The protein belongs to the protein kinase superfamily. TKL Ser/Thr protein kinase family. Pelle subfamily. As to quaternary structure, monomer. Homodimer; disulfide-linked. May interact with IRAK4 (when phosphorylated). Interacts (when phosphorylated at Ser-110) with PIN1 (via WW domain) in response to IL33-mediated (but not TLR4 ligand LPS) dendritic cell stimulation. In terms of tissue distribution, expressed in eosinophils, dendritic cells and/or monocytes (at protein level). Expressed predominantly in peripheral blood lymphocytes.

It is found in the cytoplasm. The protein resides in the nucleus. Its function is as follows. Putative inactive protein kinase which regulates signaling downstream of immune receptors including IL1R and Toll-like receptors. Inhibits dissociation of IRAK1 and IRAK4 from the Toll-like receptor signaling complex by either inhibiting the phosphorylation of IRAK1 and IRAK4 or stabilizing the receptor complex. Upon IL33-induced lung inflammation, positively regulates expression of IL6, CSF3, CXCL2 and CCL5 mRNAs in dendritic cells. This is Interleukin-1 receptor-associated kinase 3 from Homo sapiens (Human).